The sequence spans 117 residues: uncharacterized protein (117 aa).

This is an uncharacterized protein from Fowlpox virus (strain NVSL) (FPV).